Consider the following 20-residue polypeptide: GMP synthase [glutamine-hydrolyzing] (20 aa).

The 20-residue stretch at 1–20 (ALGDQLLSVFVDHTLVDEVA) folds into the GMPS ATP-PPase domain.

As to quaternary structure, homodimer.

It carries out the reaction XMP + L-glutamine + ATP + H2O = GMP + L-glutamate + AMP + diphosphate + 2 H(+). It participates in purine metabolism; GMP biosynthesis; GMP from XMP (L-Gln route): step 1/1. Functionally, catalyzes the synthesis of GMP from XMP. The sequence is that of GMP synthase [glutamine-hydrolyzing] (guaA) from Fructilactobacillus sanfranciscensis (Lactobacillus sanfranciscensis).